Reading from the N-terminus, the 286-residue chain is MHVVVVTGLSGSGKSTAIKAFEDLDYFCIDNLPVPMLPEFLALCEKDMPDIHKIALGIDIRERKFLKDYAKIFQDLEESGYRFEIIFLEAATDTLQRRYSQTRRVHPAASSQSLLVDAIHQEREQLRALRSRATRIIDTGTLSVHQLKAMITRTYSMIGDTELLSIQVLSFGFKYGLPFEADMVMDVRFLPNPYFVEALKNLDGRSEEVSSWVLRWTATREFVEEYGALLLKLIPLYIREGKRYLTVAAGCTGGKHRSVVIAERIAGTLRDHNYFVNVFHRDLHLE.

8–15 (GLSGSGKS) contributes to the ATP binding site. A GTP-binding site is contributed by 59–62 (DIRE).

It belongs to the RapZ-like family.

In terms of biological role, displays ATPase and GTPase activities. This Syntrophobacter fumaroxidans (strain DSM 10017 / MPOB) protein is Nucleotide-binding protein Sfum_2066.